We begin with the raw amino-acid sequence, 72 residues long: Protein Kish (72 aa).

The first 26 residues, 1-26, serve as a signal peptide directing secretion; it reads MSALFNFRSLLQVILLLICSCSYVHG. Residues 27–53 lie on the Lumenal side of the membrane; it reads QWPSLLDRYKNHEVLGAFWKMARVGER. The helical transmembrane segment at 54–72 threads the bilayer; sequence ASPYVSLACILMAISQFNS.

Belongs to the KISH family.

It localises to the endoplasmic reticulum membrane. The protein localises to the golgi apparatus membrane. Functionally, involved in the early part of the secretory pathway. The protein is Protein Kish of Saccharomyces cerevisiae (strain ATCC 204508 / S288c) (Baker's yeast).